We begin with the raw amino-acid sequence, 70 residues long: ATP synthase subunit c (70 aa).

2 helical membrane passes run 5–25 and 47–67; these read AAGIAAGLAAVGGAIAVAIIV and FIGVPLAEAVPIIAIVVSFIL.

This sequence belongs to the ATPase C chain family. As to quaternary structure, F-type ATPases have 2 components, F(1) - the catalytic core - and F(0) - the membrane proton channel. F(1) has five subunits: alpha(3), beta(3), gamma(1), delta(1), epsilon(1). F(0) has three main subunits: a(1), b(2) and c(10-14). The alpha and beta chains form an alternating ring which encloses part of the gamma chain. F(1) is attached to F(0) by a central stalk formed by the gamma and epsilon chains, while a peripheral stalk is formed by the delta and b chains.

The protein resides in the cell membrane. Functionally, f(1)F(0) ATP synthase produces ATP from ADP in the presence of a proton or sodium gradient. F-type ATPases consist of two structural domains, F(1) containing the extramembraneous catalytic core and F(0) containing the membrane proton channel, linked together by a central stalk and a peripheral stalk. During catalysis, ATP synthesis in the catalytic domain of F(1) is coupled via a rotary mechanism of the central stalk subunits to proton translocation. Key component of the F(0) channel; it plays a direct role in translocation across the membrane. A homomeric c-ring of between 10-14 subunits forms the central stalk rotor element with the F(1) delta and epsilon subunits. The protein is ATP synthase subunit c of Halalkalibacterium halodurans (strain ATCC BAA-125 / DSM 18197 / FERM 7344 / JCM 9153 / C-125) (Bacillus halodurans).